A 154-amino-acid chain; its full sequence is MLFIFYIPYYPGLGDFSFIINSYATNAIFLAAYALITKSKVDKIKFPIVTMLLVPLDFAAMLAGGLVSWGIVSMPYWLWGDWRLMDELARYRGELGALDAIVGGIILGYSASFAFTKVNRKHLVISWMLANSISTLVVAIFFVPHFCGMPPYRC.

Transmembrane regions (helical) follow at residues 15-37 (DFSFIINSYATNAIFLAAYALIT), 58-80 (FAAMLAGGLVSWGIVSMPYWLWG), 95-116 (LGALDAIVGGIILGYSASFAFT), and 123-145 (LVISWMLANSISTLVVAIFFVPH).

It is found in the cell membrane. This is an uncharacterized protein from Archaeoglobus fulgidus (strain ATCC 49558 / DSM 4304 / JCM 9628 / NBRC 100126 / VC-16).